A 495-amino-acid chain; its full sequence is Protein-serine O-palmitoleoyltransferase porcupine (495 aa).

The next 8 helical transmembrane spans lie at 46–66 (TQYITNFIAINLLFSVLVLIV), 92–112 (VIDHGFYHFLQLAVSLYAVQW), 184–204 (TVLSYSGYILCPANIVLGPWI), 232–252 (MLIHVFRIVTSALMAVGFLLT), 358–378 (PFGTGTAIALTYIISSLLHGL), 403–422 (LATIYSACVLVGKCPSSCTV), 434–454 (VINMLFFALNIFNLIYLGCIF), and 475–495 (TELNYASHWLLVFAYLFYFVI). The active site involves His376.

This sequence belongs to the membrane-bound acyltransferase family. Porcupine subfamily.

The protein localises to the endoplasmic reticulum membrane. It catalyses the reaction [Wnt protein]-L-serine + (9Z)-hexadecenoyl-CoA = [Wnt protein]-O-(9Z)-hexadecenoyl-L-serine + CoA. In terms of biological role, protein-serine O-palmitoleoyltransferase that acts as a key regulator of the Wnt signaling pathway by mediating the attachment of palmitoleate, a 16-carbon monounsaturated fatty acid (C16:1(9Z)), to Wnt proteins. Serine palmitoleoylation of WNT proteins is required for efficient binding to frizzled receptors. The sequence is that of Protein-serine O-palmitoleoyltransferase porcupine from Anopheles gambiae (African malaria mosquito).